The chain runs to 98 residues: Citrate lyase acyl carrier protein (98 aa).

An O-(phosphoribosyl dephospho-coenzyme A)serine modification is found at S14.

This sequence belongs to the CitD family. As to quaternary structure, oligomer with a subunit composition of (alpha,beta,gamma)6.

It is found in the cytoplasm. In terms of biological role, covalent carrier of the coenzyme of citrate lyase. The protein is Citrate lyase acyl carrier protein of Shigella boydii serotype 18 (strain CDC 3083-94 / BS512).